We begin with the raw amino-acid sequence, 75 residues long: Putative antitoxin PH1062.1 (75 aa).

This sequence belongs to the UPF0330 family.

Possibly the antitoxin component of a type II toxin-antitoxin (TA) system. The polypeptide is Putative antitoxin PH1062.1 (Pyrococcus horikoshii (strain ATCC 700860 / DSM 12428 / JCM 9974 / NBRC 100139 / OT-3)).